A 240-amino-acid polypeptide reads, in one-letter code: Uridylate kinase (240 aa).

13–16 contacts ATP; sequence KLSG. The involved in allosteric activation by GTP stretch occupies residues 21-26; sequence GDKGFG. Gly55 contacts UMP. ATP-binding residues include Gly56 and Arg60. Residues Asp75 and 136-143 each bind UMP; that span reads IGNPYFST. ATP-binding residues include Asn164, Tyr170, and Asp173.

It belongs to the UMP kinase family. In terms of assembly, homohexamer.

It is found in the cytoplasm. The enzyme catalyses UMP + ATP = UDP + ADP. It participates in pyrimidine metabolism; CTP biosynthesis via de novo pathway; UDP from UMP (UMPK route): step 1/1. With respect to regulation, allosterically activated by GTP. Inhibited by UTP. In terms of biological role, catalyzes the reversible phosphorylation of UMP to UDP. The sequence is that of Uridylate kinase from Staphylococcus epidermidis (strain ATCC 35984 / DSM 28319 / BCRC 17069 / CCUG 31568 / BM 3577 / RP62A).